A 311-amino-acid chain; its full sequence is Ribosomal RNA small subunit methyltransferase H (311 aa).

Residues 34–36 (GGY), Asp51, Phe75, Asp93, and Gln100 contribute to the S-adenosyl-L-methionine site.

It belongs to the methyltransferase superfamily. RsmH family.

Its subcellular location is the cytoplasm. It carries out the reaction cytidine(1402) in 16S rRNA + S-adenosyl-L-methionine = N(4)-methylcytidine(1402) in 16S rRNA + S-adenosyl-L-homocysteine + H(+). Its function is as follows. Specifically methylates the N4 position of cytidine in position 1402 (C1402) of 16S rRNA. The sequence is that of Ribosomal RNA small subunit methyltransferase H from Caulobacter vibrioides (strain ATCC 19089 / CIP 103742 / CB 15) (Caulobacter crescentus).